Consider the following 472-residue polypeptide: 3-isopropylmalate dehydratase large subunit (472 aa).

[4Fe-4S] cluster is bound by residues cysteine 347, cysteine 407, and cysteine 410.

This sequence belongs to the aconitase/IPM isomerase family. LeuC type 1 subfamily. In terms of assembly, heterodimer of LeuC and LeuD. The cofactor is [4Fe-4S] cluster.

The enzyme catalyses (2R,3S)-3-isopropylmalate = (2S)-2-isopropylmalate. It functions in the pathway amino-acid biosynthesis; L-leucine biosynthesis; L-leucine from 3-methyl-2-oxobutanoate: step 2/4. Its function is as follows. Catalyzes the isomerization between 2-isopropylmalate and 3-isopropylmalate, via the formation of 2-isopropylmaleate. The sequence is that of 3-isopropylmalate dehydratase large subunit from Synechococcus sp. (strain WH7803).